The following is a 681-amino-acid chain: Translation factor GUF1 homolog, chloroplastic (681 aa).

The transit peptide at 1 to 51 (MAMASAMDLSSPPTFFLSGTSTSSPSLRRLSSISVSGFRRHSNRKLQILCQ) directs the protein to the chloroplast. The tr-type G domain maps to 84–265 (SNIRNFSIIA…AIVQRIPAPL (182 aa)). Residues 93 to 100 (AHIDHGKS), 158 to 162 (DTPGH), and 212 to 215 (NKID) each bind GTP.

It belongs to the TRAFAC class translation factor GTPase superfamily. Classic translation factor GTPase family. LepA subfamily.

The protein resides in the plastid. The protein localises to the chloroplast. It carries out the reaction GTP + H2O = GDP + phosphate + H(+). Promotes chloroplast protein synthesis. May act as a fidelity factor of the translation reaction, by catalyzing a one-codon backward translocation of tRNAs on improperly translocated ribosomes. This is Translation factor GUF1 homolog, chloroplastic from Arabidopsis thaliana (Mouse-ear cress).